The chain runs to 289 residues: Lipoyl synthase 2 (289 aa).

C43, C48, C54, C69, C73, C76, and S282 together coordinate [4Fe-4S] cluster. Positions 55 to 271 constitute a Radical SAM core domain; sequence YAQKTATFLL…GAVARDLGFA (217 aa).

The protein belongs to the radical SAM superfamily. Lipoyl synthase family. It depends on [4Fe-4S] cluster as a cofactor.

The protein resides in the cytoplasm. It catalyses the reaction [[Fe-S] cluster scaffold protein carrying a second [4Fe-4S](2+) cluster] + N(6)-octanoyl-L-lysyl-[protein] + 2 oxidized [2Fe-2S]-[ferredoxin] + 2 S-adenosyl-L-methionine + 4 H(+) = [[Fe-S] cluster scaffold protein] + N(6)-[(R)-dihydrolipoyl]-L-lysyl-[protein] + 4 Fe(3+) + 2 hydrogen sulfide + 2 5'-deoxyadenosine + 2 L-methionine + 2 reduced [2Fe-2S]-[ferredoxin]. Its pathway is protein modification; protein lipoylation via endogenous pathway; protein N(6)-(lipoyl)lysine from octanoyl-[acyl-carrier-protein]: step 2/2. Functionally, catalyzes the radical-mediated insertion of two sulfur atoms into the C-6 and C-8 positions of the octanoyl moiety bound to the lipoyl domains of lipoate-dependent enzymes, thereby converting the octanoylated domains into lipoylated derivatives. The protein is Lipoyl synthase 2 of Gloeobacter violaceus (strain ATCC 29082 / PCC 7421).